Consider the following 409-residue polypeptide: Argininosuccinate synthase (409 aa).

ATP is bound at residue 10 to 18 (AYSGGLDTS). Y87 contributes to the L-citrulline binding site. G117 is a binding site for ATP. Positions 119, 123, and 124 each coordinate L-aspartate. N123 contacts L-citrulline. The L-citrulline site is built by R127, S175, S184, E260, and Y272.

This sequence belongs to the argininosuccinate synthase family. Type 1 subfamily. As to quaternary structure, homotetramer.

The protein resides in the cytoplasm. It catalyses the reaction L-citrulline + L-aspartate + ATP = 2-(N(omega)-L-arginino)succinate + AMP + diphosphate + H(+). The protein operates within amino-acid biosynthesis; L-arginine biosynthesis; L-arginine from L-ornithine and carbamoyl phosphate: step 2/3. The polypeptide is Argininosuccinate synthase (Rubrobacter xylanophilus (strain DSM 9941 / JCM 11954 / NBRC 16129 / PRD-1)).